A 603-amino-acid chain; its full sequence is Aspartate--tRNA(Asp/Asn) ligase (603 aa).

Glu-172 is an L-aspartate binding site. The tract at residues Gln-196–Lys-199 is aspartate. Residue Arg-218 coordinates L-aspartate. ATP-binding positions include Arg-218–Glu-220 and Gln-227. An L-aspartate-binding site is contributed by His-457. An ATP-binding site is contributed by Glu-491. L-aspartate is bound at residue Arg-498. Residue Gly-543–Arg-546 participates in ATP binding.

Belongs to the class-II aminoacyl-tRNA synthetase family. Type 1 subfamily. In terms of assembly, homodimer.

The protein localises to the cytoplasm. It catalyses the reaction tRNA(Asx) + L-aspartate + ATP = L-aspartyl-tRNA(Asx) + AMP + diphosphate. Functionally, aspartyl-tRNA synthetase with relaxed tRNA specificity since it is able to aspartylate not only its cognate tRNA(Asp) but also tRNA(Asn). Reaction proceeds in two steps: L-aspartate is first activated by ATP to form Asp-AMP and then transferred to the acceptor end of tRNA(Asp/Asn). The chain is Aspartate--tRNA(Asp/Asn) ligase from Laribacter hongkongensis (strain HLHK9).